We begin with the raw amino-acid sequence, 202 residues long: MHSLLFCEPGTFSLNDLKKYHSKPTIKVNDEMYNLIKNNTCLVYRDTENVHNAYLFGKLFALHTYQLVAEHFNDIAQTGFLDYELVKKGVWFKKNFDTDKLWDSYECDWDNNDLKKAVKKNNKSILWIGTTDGGDVGAYLYVHKTDGVIDSIIVDNNFFFGNLDTDSEQESDQESDQDSDQESEESDQESDQDSDQDSEGSE.

Residues 164–202 (DTDSEQESDQESDQDSDQESEESDQESDQDSDQDSEGSE) are disordered. Positions 165-202 (TDSEQESDQESDQDSDQESEESDQESDQDSDQDSEGSE) are enriched in acidic residues.

This is an uncharacterized protein from Acanthamoeba polyphaga mimivirus (APMV).